The sequence spans 571 residues: Adenine deaminase (571 aa).

Belongs to the metallo-dependent hydrolases superfamily. Adenine deaminase family. Mn(2+) serves as cofactor.

It catalyses the reaction adenine + H2O + H(+) = hypoxanthine + NH4(+). This chain is Adenine deaminase, found in Dehalococcoides mccartyi (strain ATCC BAA-2100 / JCM 16839 / KCTC 5957 / BAV1).